A 396-amino-acid chain; its full sequence is Phosphoglycerate kinase (396 aa).

Substrate-binding positions include 24–26 (DFN), Arg-39, 62–65 (HLGR), Arg-120, and Arg-153. ATP-binding positions include Lys-203, Gly-294, Glu-325, and 352 to 355 (GGDS).

The protein belongs to the phosphoglycerate kinase family. Monomer.

The protein resides in the cytoplasm. It carries out the reaction (2R)-3-phosphoglycerate + ATP = (2R)-3-phospho-glyceroyl phosphate + ADP. The protein operates within carbohydrate degradation; glycolysis; pyruvate from D-glyceraldehyde 3-phosphate: step 2/5. The sequence is that of Phosphoglycerate kinase from Dictyoglomus turgidum (strain DSM 6724 / Z-1310).